A 482-amino-acid polypeptide reads, in one-letter code: E3 ubiquitin-protein ligase makorin-1 (482 aa).

Residues 26–38 are compositionally biased toward low complexity; that stretch reads ASPTPIPTVTAPS. The disordered stretch occupies residues 26 to 52; that stretch reads ASPTPIPTVTAPSLGAGGGGGGSDGSG. Gly residues predominate over residues 40 to 52; that stretch reads GAGGGGGGSDGSG. 3 consecutive C3H1-type zinc fingers follow at residues 55 to 82, 84 to 111, and 208 to 235; these read WTKQ…HDLS, SPYS…HSKP, and ETKK…HGDS. The makorin-type Cys-His stretch occupies residues 236–263; that stretch reads CDMCGLQVLHPMDAAQRSQHIKSCIEAH. The segment at 281 to 335 adopts an RING-type zinc-finger fold; that stretch reads CGICMEVVYEKANPSERRFGILSNCNHTYCLKCIRKWRSAKQFESKIIKSCPECR. A C3H1-type 4 zinc finger spans residues 364-393; the sequence is AMSNKACRYFDEGRGSCPFGGNCFYKHAYP.

In terms of assembly, interacts with p53/TP53 and CDKN1A. Interacts with TERT, modulating telomere length homeostasis. Auto-ubiquitinated; which leads to proteasomal degradation. In terms of tissue distribution, ubiquitous.

The enzyme catalyses S-ubiquitinyl-[E2 ubiquitin-conjugating enzyme]-L-cysteine + [acceptor protein]-L-lysine = [E2 ubiquitin-conjugating enzyme]-L-cysteine + N(6)-ubiquitinyl-[acceptor protein]-L-lysine.. Its pathway is protein modification; protein ubiquitination. E3 ubiquitin ligase catalyzing the covalent attachment of ubiquitin moieties onto substrate proteins. These substrates include FILIP1, p53/TP53, CDKN1A and TERT. Keeps cells alive by suppressing p53/TP53 under normal conditions, but stimulates apoptosis by repressing CDKN1A under stress conditions. Acts as a negative regulator of telomerase. Has negative and positive effects on RNA polymerase II-dependent transcription. The sequence is that of E3 ubiquitin-protein ligase makorin-1 (MKRN1) from Homo sapiens (Human).